We begin with the raw amino-acid sequence, 69 residues long: uncharacterized protein (69 aa).

The stretch at 21-64 (LNLLKGGEEKISEVELKLDEMEKKMDSLLVQLEDLHRDNNDLAK) forms a coiled coil.

This is an uncharacterized protein from Saccharomyces cerevisiae (strain ATCC 204508 / S288c) (Baker's yeast).